The chain runs to 358 residues: Ion-translocating oxidoreductase complex subunit D (358 aa).

A run of 4 helical transmembrane segments spans residues 19–39 (IMLWVILAMMPAFFTQIYYFG), 41–61 (GVLLQSALAIGTAIIAEFIAI), 79–99 (LTALILAMAIPPYAPYWVIII), and 125–145 (IGYVILLISFPLQMTTWMPPI). At T186 the chain carries FMN phosphoryl threonine. The next 5 helical transmembrane spans lie at 220 to 240 (FAQGWWQINVAFLAGGIFLIL), 248 to 268 (IPVAMLVTFFCLATATAFTGF), 271 to 291 (LSAISQLVSGAMMFGAFFIAT), 297 to 317 (SITPRGKIIFGALVGLFVYLI), and 321 to 341 (GNYPDGVAFAILLSNICVPLI).

This sequence belongs to the NqrB/RnfD family. The complex is composed of six subunits: RnfA, RnfB, RnfC, RnfD, RnfE and RnfG. The cofactor is FMN.

It is found in the cell inner membrane. Functionally, part of a membrane-bound complex that couples electron transfer with translocation of ions across the membrane. The polypeptide is Ion-translocating oxidoreductase complex subunit D (Haemophilus influenzae (strain PittEE)).